Consider the following 220-residue polypeptide: Probable GTP-binding protein EngB (220 aa).

The region spanning 23–199 (SVREVAFAGR…ERVLASWLDI (177 aa)) is the EngB-type G domain. Mg(2+) is bound by residues serine 38 and threonine 60.

This sequence belongs to the TRAFAC class TrmE-Era-EngA-EngB-Septin-like GTPase superfamily. EngB GTPase family. Mg(2+) is required as a cofactor.

Necessary for normal cell division and for the maintenance of normal septation. In Dechloromonas aromatica (strain RCB), this protein is Probable GTP-binding protein EngB.